Consider the following 332-residue polypeptide: 5-dehydro-2-deoxygluconokinase 1 (332 aa).

It belongs to the carbohydrate kinase PfkB family.

The enzyme catalyses 5-dehydro-2-deoxy-D-gluconate + ATP = 6-phospho-5-dehydro-2-deoxy-D-gluconate + ADP + H(+). The protein operates within polyol metabolism; myo-inositol degradation into acetyl-CoA; acetyl-CoA from myo-inositol: step 5/7. In terms of biological role, catalyzes the phosphorylation of 5-dehydro-2-deoxy-D-gluconate (2-deoxy-5-keto-D-gluconate or DKG) to 6-phospho-5-dehydro-2-deoxy-D-gluconate (DKGP). In Bacillus cereus (strain ZK / E33L), this protein is 5-dehydro-2-deoxygluconokinase 1.